The following is a 461-amino-acid chain: Putative transcription initiation factor IIB-like protein (461 aa).

The disordered stretch occupies residues 113 to 142; sequence SESLENIQSENSENNDNFTDNNTKKSPTKS. Low complexity predominate over residues 121–137; sequence SENSENNDNFTDNNTKK. The TFIIB-type zinc finger occupies 141–173; sequence KSRICSGCGSKGTLLEDQSSSVLVCSECGMIND. Residues Cys-145, Cys-165, and Cys-168 each contribute to the Zn(2+) site. Tandem repeats lie at residues 246–327 and 360–430.

It belongs to the TFIIB family.

This chain is Putative transcription initiation factor IIB-like protein, found in Acanthamoeba polyphaga mimivirus (APMV).